The chain runs to 1001 residues: Serine/threonine-protein kinase TAO1 (1001 aa).

Ser-9 carries the phosphoserine modification. One can recognise a Protein kinase domain in the interval 28-281 (FTDLREIGHG…SEELLKHMFV (254 aa)). Residues 34–42 (IGHGSFGAV) and Lys-57 contribute to the ATP site. The active-site Proton acceptor is Asp-151. Disordered regions lie at residues 324-380 (PAVE…DKSE) and 404-431 (ENYQ…HKSH). Residues 350-370 (SNQSIPSMSISASSQSSSVNS) show a composition bias toward low complexity. Residues Ser-421 and Ser-445 each carry the phosphoserine modification. Positions 458–651 (SELREQMSGY…QTQKDLEHAM (194 aa)) form a coiled coil. The segment at 567–587 (KEELNENQSTPKKEKQEWLSK) is disordered. Positions 577-587 (PKKEKQEWLSK) are enriched in basic and acidic residues. Thr-669 bears the Phosphothreonine mark. Residues 754–877 (KAVLKRLKEE…LERQAREIEA (124 aa)) adopt a coiled-coil conformation. Positions 905–1001 (PGASSWSHNP…ISNGSHMSYT (97 aa)) are disordered. The segment covering 906–915 (GASSWSHNPT) has biased composition (polar residues). At Ser-965 the chain carries Phosphoserine. A compositionally biased stretch (polar residues) spans 975 to 1001 (GGRTEQGMSRSTSVTSQISNGSHMSYT).

This sequence belongs to the protein kinase superfamily. STE Ser/Thr protein kinase family. STE20 subfamily. In terms of assembly, self-associates. Interacts with MAP2K3. Interacts with SPRED1. Interacts with TESK1; the interaction inhibits TAOK1 kinase activity. Interacts with MAP3K7. Post-translationally, proteolytically processed by caspase-3 (CASP3). Autophosphorylated. Phosphorylated by ATM in response to DNA damage. Phosphorylated by LRRK2.

It is found in the cytoplasm. It carries out the reaction L-seryl-[protein] + ATP = O-phospho-L-seryl-[protein] + ADP + H(+). The catalysed reaction is L-threonyl-[protein] + ATP = O-phospho-L-threonyl-[protein] + ADP + H(+). With respect to regulation, serine/threonine-protein kinase activity is inhibited by SPRED1. Functionally, serine/threonine-protein kinase involved in various processes such as p38/MAPK14 stress-activated MAPK cascade, DNA damage response and regulation of cytoskeleton stability. Phosphorylates MAP2K3, MAP2K6 and MARK2. Acts as an activator of the p38/MAPK14 stress-activated MAPK cascade by mediating phosphorylation and subsequent activation of the upstream MAP2K3 and MAP2K6 kinases. Involved in G-protein coupled receptor signaling to p38/MAPK14. In response to DNA damage, involved in the G2/M transition DNA damage checkpoint by activating the p38/MAPK14 stress-activated MAPK cascade, probably by mediating phosphorylation of MAP2K3 and MAP2K6. Acts as a regulator of cytoskeleton stability by phosphorylating 'Thr-208' of MARK2, leading to activate MARK2 kinase activity and subsequent phosphorylation and detachment of MAPT/TAU from microtubules. Also acts as a regulator of apoptosis: regulates apoptotic morphological changes, including cell contraction, membrane blebbing and apoptotic bodies formation via activation of the MAPK8/JNK cascade. During fetal development, it plays an essential role in the regulation of neuronal differentiation and migration to the cortical plate. The sequence is that of Serine/threonine-protein kinase TAO1 (Taok1) from Rattus norvegicus (Rat).